The primary structure comprises 564 residues: Kelch repeat and BTB domain-containing protein A55 (564 aa).

The 68-residue stretch at cysteine 21–asparagine 88 folds into the BTB domain. 6 Kelch repeats span residues isoleucine 252 to asparagine 297, isoleucine 298 to glutamate 346, tyrosine 347 to glycine 395, isoleucine 397 to glycine 441, lysine 442 to asparagine 492, and leucine 494 to isoleucine 539.

It belongs to the poxviruses A55 protein family. Interacts (via BTB domain) with host CUL3.

Its subcellular location is the host cytoplasm. Its function is as follows. Probable substrate-specific adapter of CUL3-containing E3 ubiquitin-protein ligases which mediate the ubiquitination and subsequent proteasomal degradation of host target proteins. This chain is Kelch repeat and BTB domain-containing protein A55 (KBTB1), found in Bos taurus (Bovine).